A 433-amino-acid polypeptide reads, in one-letter code: Myricetin 3-O-glucosyl 1,2-rhamnoside 6'-O-caffeoyltransferase AT1 (433 aa).

Active-site proton acceptor residues include histidine 157 and aspartate 375.

The protein belongs to the plant acyltransferase family. As to expression, expressed in young cromes.

It carries out the reaction myricetin 3-O-[beta-D-glucosyl-(1-&gt;2)-alpha-L-rhamnoside] + (E)-caffeoyl-CoA = myricetin 3-O-[(6-O-(E)-caffeoyl-beta-D-glucosyl)-(1-&gt;2)-alpha-L-rhamnoside] + CoA. It functions in the pathway flavonoid metabolism. Functionally, caffeoyltransferase involved in montbretin A (MbA) biosynthesis. Catalyzes the caffeoylation of myricetin 3-O-beta-D-glucosyl 1,2-alpha-L-rhamnoside (MRG) to produce myricetin 3-O-(6'-O-caffeoyl)-beta-D-glucosyl 1,2-alpha-L-rhamnoside (mini-MbA), a precursor of MbA. Mini-MbA and MbA are potent inhibitors of human pancreatic alpha-amylase and are being developed as drug candidates to treat type-2 diabetes. In vitro, is able to catalyze the caffeoylation of quercetin 3-O-sophoroside (QGG), although QGG may not be a physiological substrate in vivo. In vitro, can use coumaryl-CoA, feruloyl-CoA and acetyl-CoA, although these three acyl donors may not be physiological in vivo. The chain is Myricetin 3-O-glucosyl 1,2-rhamnoside 6'-O-caffeoyltransferase AT1 from Crocosmia x crocosmiiflora (Montbretia).